A 247-amino-acid chain; its full sequence is Granulin (247 aa).

Belongs to the polyhedrin family.

In terms of biological role, component of the virus occlusion bodies, which are large proteinaceous structures, that protect the virus from the outside environment for extended periods until they are ingested by insect larvae. The polypeptide is Granulin (Agrotis segetum granulosis virus (AsGV)).